A 78-amino-acid chain; its full sequence is Small ribosomal subunit protein uS17 (78 aa).

This sequence belongs to the universal ribosomal protein uS17 family. In terms of assembly, part of the 30S ribosomal subunit.

Its function is as follows. One of the primary rRNA binding proteins, it binds specifically to the 5'-end of 16S ribosomal RNA. The protein is Small ribosomal subunit protein uS17 of Agrobacterium fabrum (strain C58 / ATCC 33970) (Agrobacterium tumefaciens (strain C58)).